A 596-amino-acid polypeptide reads, in one-letter code: Transketolase-like protein 1 (596 aa).

Histidine 46 provides a ligand contact to substrate. Thiamine diphosphate is bound by residues serine 49 and 94-96 (GWL). Aspartate 126 is a binding site for Mg(2+). Valine 127 and asparagine 156 together coordinate thiamine diphosphate. Residues asparagine 156 and leucine 158 each contribute to the Mg(2+) site. Thiamine diphosphate is bound by residues lysine 218 and histidine 232. Histidine 232, arginine 292, and serine 319 together coordinate substrate. Positions 340 and 366 each coordinate thiamine diphosphate. Glutamate 340 acts as the Proton donor in catalysis. Residues histidine 390 and aspartate 398 each contribute to the substrate site. A thiamine diphosphate-binding site is contributed by glutamine 402. Position 448 (arginine 448) interacts with substrate.

Belongs to the transketolase family. Homodimer. It depends on Mg(2+) as a cofactor. Requires Ca(2+) as cofactor. The cofactor is Mn(2+). Co(2+) is required as a cofactor. Thiamine diphosphate serves as cofactor.

Its subcellular location is the cytoplasm. It carries out the reaction D-sedoheptulose 7-phosphate + D-glyceraldehyde 3-phosphate = aldehydo-D-ribose 5-phosphate + D-xylulose 5-phosphate. Its function is as follows. Catalyzes the transfer of a two-carbon ketol group from a ketose donor to an aldose acceptor, via a covalent intermediate with the cofactor thiamine pyrophosphate. This Bos taurus (Bovine) protein is Transketolase-like protein 1 (TKTL1).